A 237-amino-acid polypeptide reads, in one-letter code: Uridylate kinase (237 aa).

12 to 15 (KLSG) serves as a coordination point for ATP. G53 provides a ligand contact to UMP. ATP-binding residues include G54 and R58. UMP contacts are provided by residues D73 and 134–141 (TGNPYFTT). Residues T161, Y167, and D170 each contribute to the ATP site.

It belongs to the UMP kinase family. In terms of assembly, homohexamer.

Its subcellular location is the cytoplasm. The catalysed reaction is UMP + ATP = UDP + ADP. The protein operates within pyrimidine metabolism; CTP biosynthesis via de novo pathway; UDP from UMP (UMPK route): step 1/1. Inhibited by UTP. Its function is as follows. Catalyzes the reversible phosphorylation of UMP to UDP. The protein is Uridylate kinase of Rhizorhabdus wittichii (strain DSM 6014 / CCUG 31198 / JCM 15750 / NBRC 105917 / EY 4224 / RW1) (Sphingomonas wittichii).